A 159-amino-acid polypeptide reads, in one-letter code: Protein hunchback (159 aa).

Over residues 18 to 34 the composition is skewed to basic residues; that stretch reads HNHHHHHHHGHHQHQQR. 2 disordered regions span residues 18 to 49 and 119 to 159; these read HNHH…QSPL and LTPP…KYMA. The span at 140-159 shows a compositional bias: basic and acidic residues; the sequence is EPEKEHDLMSNSSEDMKYMA.

It belongs to the hunchback C2H2-type zinc-finger protein family.

It localises to the nucleus. Functionally, gap class segmentation protein that controls development of head structures. The chain is Protein hunchback (hb) from Drosophila soonae (Fruit fly).